Here is a 396-residue protein sequence, read N- to C-terminus: Na(+)/H(+) antiporter NhaA 2 (396 aa).

11 helical membrane-spanning segments follow: residues Leu17–Phe37, Leu62–Ile82, Ser98–Leu118, Gly125–Gly145, Leu154–Phe174, Leu179–Tyr199, Ile209–Ala229, Phe268–Phe288, Leu296–Phe316, Ile337–Leu357, and Val368–Ile388.

It belongs to the NhaA Na(+)/H(+) (TC 2.A.33) antiporter family.

The protein localises to the cell inner membrane. It carries out the reaction Na(+)(in) + 2 H(+)(out) = Na(+)(out) + 2 H(+)(in). Its function is as follows. Na(+)/H(+) antiporter that extrudes sodium in exchange for external protons. In Aliarcobacter butzleri (strain RM4018) (Arcobacter butzleri), this protein is Na(+)/H(+) antiporter NhaA 2.